The following is a 132-amino-acid chain: UPF0299 membrane protein YohJ (132 aa).

4 helical membrane passes run 8 to 28, 31 to 51, 63 to 83, and 93 to 113; these read IWQYVRAFVLIYACLYAGIFI, LLPVTIPGSIIGMLILFVLLA, GCYLLIRYMALLFVPIGVGVM, and FGPVVVSCAISTLVVFLVVSW.

The protein belongs to the UPF0299 family.

The protein localises to the cell inner membrane. The protein is UPF0299 membrane protein YohJ of Escherichia fergusonii (strain ATCC 35469 / DSM 13698 / CCUG 18766 / IAM 14443 / JCM 21226 / LMG 7866 / NBRC 102419 / NCTC 12128 / CDC 0568-73).